Here is a 467-residue protein sequence, read N- to C-terminus: E3 ubiquitin-protein ligase IE61 (467 aa).

The RING-type zinc-finger motif lies at 19-58; that stretch reads CTICMSTVSDLGKTMPCLHDFCFVCIRAWTSTSVQCPLCR. 4 disordered regions span residues 101–171, 205–238, 344–364, and 413–467; these read GDVI…GVTK, QQPRTGGQDYRDRPVSVGINQDPRTMDRLPFRAT, IVRPETTSTGETSRGDERDTR, and DSAC…MKKS. Over residues 116-143 the composition is skewed to polar residues; it reads ESIQQPTSRSSREPIQSPNPGPLQSSAR. Residues 149 to 161 show a composition bias toward low complexity; that stretch reads SPSDSQQDSIQPP. The span at 162–171 shows a compositional bias: polar residues; that stretch reads TRDSSPGVTK. Residues 228-238 show a composition bias toward basic and acidic residues; sequence RTMDRLPFRAT. Low complexity-rich tracts occupy residues 429 to 443 and 450 to 459; these read GESNTPSTSGSTSGS and KSSAGKAGKG.

As to quaternary structure, interacts with host BTRC; this interaction seems to inactivate SCF-mediated protein degradation in general. Post-translationally, auto-ubiquitinated.

It carries out the reaction S-ubiquitinyl-[E2 ubiquitin-conjugating enzyme]-L-cysteine + [acceptor protein]-L-lysine = [E2 ubiquitin-conjugating enzyme]-L-cysteine + N(6)-ubiquitinyl-[acceptor protein]-L-lysine.. Its function is as follows. RING-finger E3 ubiquitin ligase that degrades host SP100, one of the major components of ND10 nuclear bodies, thereby disrupting the organization of these bodies. Also plays a role in the inhibition of host NF-kappa-B pathway by blocking the SCF(BTRC)-mediated addition of ubiquitin chains to host I-kappa-B-alpha/NFKBIA, thereby interfering with its degradation. The protein is E3 ubiquitin-protein ligase IE61 (61) of Varicella-zoster virus (strain Dumas) (HHV-3).